We begin with the raw amino-acid sequence, 387 residues long: Galanin receptor type 2 (387 aa).

Over 1-28 (MNVSGCPGAGNASQAGGGGGWHPEAVIV) the chain is Extracellular. Asparagine 2 and asparagine 11 each carry an N-linked (GlcNAc...) asparagine glycan. A helical membrane pass occupies residues 29–49 (PLLFALIFLVGTVGNTLVLAV). Over 50–60 (LLRGGQAVSTT) the chain is Cytoplasmic. The chain crosses the membrane as a helical span at residues 61–81 (NLFILNLGVADLCFILCCVPF). Residues 82 to 99 (QATIYTLDGWVFGSLLCK) are Extracellular-facing. A disulfide bridge connects residues cysteine 98 and cysteine 175. Residues 100 to 121 (AVHFLIFLTMHASSFTLAAVSL) traverse the membrane as a helical segment. At 122–141 (DRYLAIRYPLHSRELRTPRN) the chain is on the cytoplasmic side. A helical membrane pass occupies residues 142–162 (ALAAIGLIWGLSLLFSGPYLS). Residues 163–187 (YYRQSQLANLTVCHPAWSAPRRRAM) are Extracellular-facing. Residues 188–208 (DICTFVFSYLLPVLVLGLTYA) form a helical membrane-spanning segment. Residues 209–237 (RTLRYLWRAVDPVAAGSGARRAKRKVTRM) are Cytoplasmic-facing. A helical membrane pass occupies residues 238–258 (ILIVAALFCLCWMPHHALILC). At 259–260 (VW) the chain is on the extracellular side. Residues 261 to 281 (FGQFPLTRATYALRILSHLVS) form a helical membrane-spanning segment. Topologically, residues 282–387 (YANSCVNPIV…GDSILTVDVA (106 aa)) are cytoplasmic.

The protein belongs to the G-protein coupled receptor 1 family. Expressed abundantly within the central nervous system in both hypothalamus and hippocampus. In peripheral tissues, the strongest expression was observed in heart, kidney, liver, and small intestine.

It localises to the cell membrane. In terms of biological role, receptor for the hormone galanin and GALP. Receptor for the hormone spexin-1. The activity of this receptor is mediated by G proteins that activate the phospholipase C/protein kinase C pathway (via G(q)) and that inhibit adenylyl cyclase (via G(i)). In Homo sapiens (Human), this protein is Galanin receptor type 2 (GALR2).